The sequence spans 394 residues: Probable fatty acyl-CoA transferase Rv3272 (394 aa).

The active-site Nucleophile is the D175.

Belongs to the CoA-transferase III family. As to quaternary structure, homodimer.

Its function is as follows. Probably involved in fatty acid metabolism. Binds to fatty acyl-CoAs of varying carbon chain lengths, with the highest binding affinity for palmitoyl-CoA (C16:0). In vitro, alters the cell wall lipid profile and protects mycobacteria from acidic, oxidative and antibiotic stress. May play a significant role in host-pathogen interaction. This is Probable fatty acyl-CoA transferase Rv3272 from Mycobacterium tuberculosis (strain ATCC 25618 / H37Rv).